Reading from the N-terminus, the 147-residue chain is Hemoglobin subunit gamma (147 aa).

The region spanning 3–147 (HFTAEEKAVI…VAIALAHKYH (145 aa)) is the Globin domain. The heme b site is built by His64 and His93.

Belongs to the globin family. Heterotetramer of two alpha chains and two gamma chains in fetal hemoglobin (Hb F). As to expression, red blood cells.

Its function is as follows. Gamma chains make up the fetal hemoglobin F, in combination with alpha chains. This chain is Hemoglobin subunit gamma (HBG), found in Eulemur fulvus fulvus (Brown lemur).